Here is a 157-residue protein sequence, read N- to C-terminus: Endoribonuclease YbeY (157 aa).

3 residues coordinate Zn(2+): His-116, His-120, and His-126.

It belongs to the endoribonuclease YbeY family. Requires Zn(2+) as cofactor.

It localises to the cytoplasm. In terms of biological role, single strand-specific metallo-endoribonuclease involved in late-stage 70S ribosome quality control and in maturation of the 3' terminus of the 16S rRNA. The protein is Endoribonuclease YbeY of Arthrobacter sp. (strain FB24).